We begin with the raw amino-acid sequence, 149 residues long: uncharacterized protein (149 aa).

The protein to Rhizobium NGR234A y4oM.

This is an uncharacterized protein from Sinorhizobium fredii (strain NBRC 101917 / NGR234).